The following is a 135-amino-acid chain: Early E3 15.3 kDa protein (135 aa).

The protein belongs to the adenoviridae E3_15 family.

In terms of biological role, protects virus-infected cells from TNF-induced cytolysis. This chain is Early E3 15.3 kDa protein, found in Human adenovirus B serotype 7 (HAdV-7).